Reading from the N-terminus, the 264-residue chain is Taurine import ATP-binding protein TauB (264 aa).

The 230-residue stretch at 4–233 folds into the ABC transporter domain; sequence LQLERISAQY…RYAAGESARA (230 aa). 38–45 provides a ligand contact to ATP; the sequence is GPSGSGKT.

It belongs to the ABC transporter superfamily. Taurine importer (TC 3.A.1.17.1) family. The complex is composed of two ATP-binding proteins (TauB), two transmembrane proteins (TauC) and a solute-binding protein (TauA).

Its subcellular location is the cell inner membrane. The enzyme catalyses taurine(out) + ATP + H2O = taurine(in) + ADP + phosphate + H(+). Functionally, part of the ABC transporter complex TauABC involved in taurine import. Responsible for energy coupling to the transport system. The chain is Taurine import ATP-binding protein TauB from Pseudomonas fluorescens (strain Pf0-1).